A 176-amino-acid chain; its full sequence is Ribosome rescue factor SmrB (176 aa).

A Smr domain is found at 97–172 (LDMHGMTQQE…GDGALLVLLS (76 aa)).

The protein belongs to the SmrB family. As to quaternary structure, associates with collided ribosomes, but not with correctly translating polysomes.

In terms of biological role, acts as a ribosome collision sensor. Detects stalled/collided disomes (pairs of ribosomes where the leading ribosome is stalled and a second ribosome has collided with it) and endonucleolytically cleaves mRNA at the 5' boundary of the stalled ribosome. Stalled/collided disomes form a new interface (primarily via the 30S subunits) that binds SmrB. Cleaved mRNA becomes available for tmRNA ligation, leading to ribosomal subunit dissociation and rescue of stalled ribosomes. The polypeptide is Ribosome rescue factor SmrB (Vibrio vulnificus (strain CMCP6)).